We begin with the raw amino-acid sequence, 303 residues long: Bifunctional protein FolD (303 aa).

NADP(+) is bound by residues 175–177 and I243; that span reads GVS.

Belongs to the tetrahydrofolate dehydrogenase/cyclohydrolase family. Homodimer.

It carries out the reaction (6R)-5,10-methylene-5,6,7,8-tetrahydrofolate + NADP(+) = (6R)-5,10-methenyltetrahydrofolate + NADPH. The catalysed reaction is (6R)-5,10-methenyltetrahydrofolate + H2O = (6R)-10-formyltetrahydrofolate + H(+). It functions in the pathway one-carbon metabolism; tetrahydrofolate interconversion. Catalyzes the oxidation of 5,10-methylenetetrahydrofolate to 5,10-methenyltetrahydrofolate and then the hydrolysis of 5,10-methenyltetrahydrofolate to 10-formyltetrahydrofolate. The protein is Bifunctional protein FolD of Xanthomonas axonopodis pv. citri (strain 306).